The following is a 487-amino-acid chain: UDP-N-acetylmuramate--L-alanine ligase (487 aa).

Residue 122-128 (GTHGKTS) coordinates ATP.

The protein belongs to the MurCDEF family.

It localises to the cytoplasm. The enzyme catalyses UDP-N-acetyl-alpha-D-muramate + L-alanine + ATP = UDP-N-acetyl-alpha-D-muramoyl-L-alanine + ADP + phosphate + H(+). Its pathway is cell wall biogenesis; peptidoglycan biosynthesis. Functionally, cell wall formation. The polypeptide is UDP-N-acetylmuramate--L-alanine ligase (Corynebacterium urealyticum (strain ATCC 43042 / DSM 7109)).